The following is a 201-amino-acid chain: MTDQGENEKKQRRSNATIAVACLSFFVCMIGAAYASVPLYRIFCQVTGYGGTTQRVEQYSNTILDKTIKVRFDANIANGLPWDFKPMQREVTVRIGETTMIKYEAHNLFGEETYGRASFNVAPGRAGAYFNKVECFCFTDNTLKPGEDLELPVVFFVDPEFVNDPDLKDVKTITLSYTFFPIDKPKPVVNAKAVGSTRNGG.

Residues 1–13 (MTDQGENEKKQRR) are Cytoplasmic-facing. Residues 14–36 (SNATIAVACLSFFVCMIGAAYAS) form a helical; Signal-anchor for type II membrane protein membrane-spanning segment. Residues 37–201 (VPLYRIFCQV…KAVGSTRNGG (165 aa)) lie on the Periplasmic side of the membrane.

It belongs to the COX11/CtaG family.

It localises to the cell inner membrane. In terms of biological role, exerts its effect at some terminal stage of cytochrome c oxidase synthesis, probably by being involved in the insertion of the copper B into subunit I. The polypeptide is Cytochrome c oxidase assembly protein CtaG (Brucella ovis (strain ATCC 25840 / 63/290 / NCTC 10512)).